Here is a 334-residue protein sequence, read N- to C-terminus: MKVSKVYTTIDAHVAGEPLRIITGGVPEIKGDTQLERRAYCMEHLDHLREVLMYEPRGHHGMYGCIITPPASAHADFGVLFMHNEGWSTMCGHGIIAVITVGIETGMFEVTGEKQNFIIDSPAGEVIAYAKYNGSEVESVSFENVPSFVYKKDVPIIIDDYEFQVDIAFGGAFYAVVDSKEFGLKVDFKDLSAIQMWGGKIKHYIESKMEVKHPLEEGLKGIYGVIFSDEPKGEDATLRNVTIFADGQVDRSPCGTGTSARIATLFEKDALQKGEIFVHECITDGKFEGEVLSVTAVDTYEAVVPKVTGHAFITGFHQFVVDPRDDLKRGFLLG.

Cys-91 serves as the catalytic Proton acceptor. Substrate contacts are provided by residues 92–93 (GH), Asp-250, and 255–256 (GT).

The protein belongs to the proline racemase family.

It catalyses the reaction trans-3-hydroxy-L-proline = 1-pyrroline-2-carboxylate + H2O. Its function is as follows. Catalyzes the dehydration of trans-3-hydroxy-L-proline (t3LHyp) to Delta(1)-pyrroline-2-carboxylate (Pyr2C). Is likely involved in a degradation pathway that converts t3LHyp to L-proline. Can also catalyze the epimerization of trans-4-hydroxy-L-proline (t4LHyp) to cis-4-hydroxy-D-proline (c4DHyp) in vitro. Displays no proline racemase activity. The chain is Trans-3-hydroxy-L-proline dehydratase from Bacillus thuringiensis subsp. konkukian (strain 97-27).